The primary structure comprises 118 residues: Protein MT2260 (118 aa).

This sequence belongs to the HesB/IscA family.

The chain is Protein MT2260 from Mycobacterium tuberculosis (strain CDC 1551 / Oshkosh).